Consider the following 557-residue polypeptide: MAFNRRSKNITQGVSRSPNRSMYYAMGYEKADFDKPMVGIANGHSTITPCNSGLQKLADIAIKTIKDAGGNPQVFGTPTISDGMSMGTEGMKYSLISREVIADCIETAVNGQWMDGVLVIGGCDKNMPGGMIAMLRTNVPSIYVYGGTIKPGHWKGKDLTIVSAFEAVGEFTAGRMSQEDFDGIERNACPSSGSCGGMYTANTMSSSFEALGLALPYSSTMANPDDEKVGSAAESARVLIEAIKKDLKPRDIVTRKAIENAVAVIMATGGSTNAVLHFLAIAHAAEIDWTIDDFERMRKKVPVICDLKPSGKYVATDLHKAGGIPQVMKVLLDAGLLHGDCMTITGQTVAEALAHIPSVPSADQDVIHTIDKALYAQGHLAILKGNLSPEGCVAKITGLKNPVITGPARVFDDEYSAMDAIMANQIKAGDVLVMRYLGPKGGPGMPEMLAPTSALVGQGLGESVGLITDGRFSGGTWGMVVGHVSPEAFVGGTIGLVEEGDSVTIDARQLLIQLNVSEEEIARRRANWKQPAPRYTRGVLAKYAALASTASKGAVTG.

Residue Cys50 participates in [2Fe-2S] cluster binding. Asp82 provides a ligand contact to Mg(2+). Cys123 is a [2Fe-2S] cluster binding site. Residues Asp124 and Lys125 each contribute to the Mg(2+) site. At Lys125 the chain carries N6-carboxylysine. Cys195 contacts [2Fe-2S] cluster. Glu447 contributes to the Mg(2+) binding site. Ser473 serves as the catalytic Proton acceptor.

The protein belongs to the IlvD/Edd family. As to quaternary structure, homodimer. It depends on [2Fe-2S] cluster as a cofactor. The cofactor is Mg(2+).

The catalysed reaction is (2R)-2,3-dihydroxy-3-methylbutanoate = 3-methyl-2-oxobutanoate + H2O. It catalyses the reaction (2R,3R)-2,3-dihydroxy-3-methylpentanoate = (S)-3-methyl-2-oxopentanoate + H2O. It functions in the pathway amino-acid biosynthesis; L-isoleucine biosynthesis; L-isoleucine from 2-oxobutanoate: step 3/4. Its pathway is amino-acid biosynthesis; L-valine biosynthesis; L-valine from pyruvate: step 3/4. Its function is as follows. Functions in the biosynthesis of branched-chain amino acids. Catalyzes the dehydration of (2R,3R)-2,3-dihydroxy-3-methylpentanoate (2,3-dihydroxy-3-methylvalerate) into 2-oxo-3-methylpentanoate (2-oxo-3-methylvalerate) and of (2R)-2,3-dihydroxy-3-methylbutanoate (2,3-dihydroxyisovalerate) into 2-oxo-3-methylbutanoate (2-oxoisovalerate), the penultimate precursor to L-isoleucine and L-valine, respectively. This chain is Dihydroxy-acid dehydratase, found in Herminiimonas arsenicoxydans.